We begin with the raw amino-acid sequence, 892 residues long: Putative GTP diphosphokinase RSH1, chloroplastic (892 aa).

A chloroplast-targeting transit peptide spans 1–52; the sequence is MQPPTGAVSGSSSSSLECVSSCRTSWRGGGRPYECSVLSCAWNAPRALTGAL. An HD domain is found at 184–291; sequence FIIHPVEVAR…VKLADRLHNM (108 aa). Residues 574 to 637 enclose the TGS domain; it reads LGSRVFVFTP…ANAEVVEIII (64 aa). In terms of domain architecture, ACT spans 809–880; sequence WLCIVCVDRK…MILGVLGWSV (72 aa).

This sequence belongs to the RelA/SpoT family.

It localises to the plastid. The protein resides in the chloroplast. It carries out the reaction GTP + ATP = guanosine 3'-diphosphate 5'-triphosphate + AMP. Its function is as follows. May be involved in a rapid plant ppGpp (guanosine 3'-diphosphate 5'-diphosphate)-mediated response to pathogens and other stresses. The protein is Putative GTP diphosphokinase RSH1, chloroplastic (RSH1) of Oryza sativa subsp. japonica (Rice).